Reading from the N-terminus, the 396-residue chain is Tryptophan synthase beta chain (396 aa).

Residue Lys-86 is modified to N6-(pyridoxal phosphate)lysine.

This sequence belongs to the TrpB family. Tetramer of two alpha and two beta chains. Pyridoxal 5'-phosphate is required as a cofactor.

It catalyses the reaction (1S,2R)-1-C-(indol-3-yl)glycerol 3-phosphate + L-serine = D-glyceraldehyde 3-phosphate + L-tryptophan + H2O. The protein operates within amino-acid biosynthesis; L-tryptophan biosynthesis; L-tryptophan from chorismate: step 5/5. Functionally, the beta subunit is responsible for the synthesis of L-tryptophan from indole and L-serine. This is Tryptophan synthase beta chain from Aliivibrio fischeri (strain ATCC 700601 / ES114) (Vibrio fischeri).